We begin with the raw amino-acid sequence, 494 residues long: Glutamyl-tRNA(Gln) amidotransferase subunit A (494 aa).

Residues K79 and S159 each act as charge relay system in the active site. S183 (acyl-ester intermediate) is an active-site residue.

It belongs to the amidase family. GatA subfamily. As to quaternary structure, heterotrimer of A, B and C subunits.

The catalysed reaction is L-glutamyl-tRNA(Gln) + L-glutamine + ATP + H2O = L-glutaminyl-tRNA(Gln) + L-glutamate + ADP + phosphate + H(+). Its function is as follows. Allows the formation of correctly charged Gln-tRNA(Gln) through the transamidation of misacylated Glu-tRNA(Gln) in organisms which lack glutaminyl-tRNA synthetase. The reaction takes place in the presence of glutamine and ATP through an activated gamma-phospho-Glu-tRNA(Gln). The protein is Glutamyl-tRNA(Gln) amidotransferase subunit A of Bartonella tribocorum (strain CIP 105476 / IBS 506).